Here is a 460-residue protein sequence, read N- to C-terminus: Photosystem II CP43 reaction center protein (460 aa).

The Cytoplasmic portion of the chain corresponds to 1-35 (MVTLSNTSMVGGRDLPSTGFAWWSGNARLINLSGK). A helical membrane pass occupies residues 36 to 58 (LLGAHVAHAGLIVFWAGAMTLFE). The Lumenal, thylakoid portion of the chain corresponds to 59–98 (VAHFIPEKPMYEQGLILLPHIATLGWGVGPAGEVTDIFPF). A helical transmembrane segment spans residues 99–121 (FVVGVLHLISSAVLGLGGIYHAL). Topologically, residues 122-142 (RGPEVLEEYSSFFGYDWKDKN) are cytoplasmic. Residues 143–165 (QMTNIIGYHLILLGCGALLLVFK) form a helical membrane-spanning segment. Over 166–220 (AMFFGGVYDTWAPGGGDVRVITNPTLNPAIIFGYLLKAPFGGEGWIISVNNMEDI) the chain is Lumenal, thylakoid. Residues 221-240 (IGGHIWIGLICISGGIWHIL) form a helical membrane-spanning segment. At 241–255 (TKPFGWARRALIWSG) the chain is on the cytoplasmic side. Residues 256-276 (EAYLSYSLGALSLMGFIASVF) traverse the membrane as a helical segment. Residues 277-411 (VWFNNTAYPS…NSFNYVSPRA (135 aa)) lie on the Lumenal, thylakoid side of the membrane. 2 residues coordinate [CaMn4O5] cluster: E341 and R344. Residues 412-436 (WLATSHFVLGFFFLVGHLWHAGRAR) form a helical membrane-spanning segment. Residues 437–460 (AAAAGFEKGIDRETEPTLFMPDLD) are Cytoplasmic-facing.

It belongs to the PsbB/PsbC family. PsbC subfamily. In terms of assembly, PSII is composed of 1 copy each of membrane proteins PsbA, PsbB, PsbC, PsbD, PsbE, PsbF, PsbH, PsbI, PsbJ, PsbK, PsbL, PsbM, PsbT, PsbX, PsbY, PsbZ, Psb30/Ycf12, peripheral proteins PsbO, CyanoQ (PsbQ), PsbU, PsbV and a large number of cofactors. It forms dimeric complexes. It depends on Binds multiple chlorophylls and provides some of the ligands for the Ca-4Mn-5O cluster of the oxygen-evolving complex. It may also provide a ligand for a Cl- that is required for oxygen evolution. PSII binds additional chlorophylls, carotenoids and specific lipids. as a cofactor.

It is found in the cellular thylakoid membrane. Its function is as follows. One of the components of the core complex of photosystem II (PSII). PSII binds chlorophyll and helps catalyze the primary light-induced photochemical processes of PSII. PSII is a light-driven water:plastoquinone oxidoreductase, using light energy to abstract electrons from H(2)O, generating O(2) and a proton gradient subsequently used for ATP formation. Required for correct assembly of PSII. In Synechocystis sp. (strain ATCC 27184 / PCC 6803 / Kazusa), this protein is Photosystem II CP43 reaction center protein.